A 289-amino-acid polypeptide reads, in one-letter code: Rhodopsin (289 aa).

Over 1–7 (YLVNPAA) the chain is Extracellular. A helical membrane pass occupies residues 8 to 32 (YAALGAYMFLLILIGFPINFLTLYV). Residues 33–44 (TLEHKKLRTPLN) lie on the Cytoplasmic side of the membrane. The chain crosses the membrane as a helical span at residues 45–67 (YILLNLAVANLFMVLGGFTTTMY). Topologically, residues 68 to 81 (TSMHGYFVLGRLGC) are extracellular. The cysteines at positions 81 and 158 are disulfide-linked. The chain crosses the membrane as a helical span at residues 82-104 (NLEAFFATLGGEIALWSLVVLAI). Positions 105–107 (ERW) match the 'Ionic lock' involved in activated form stabilization motif. The Cytoplasmic portion of the chain corresponds to 105–123 (ERWIVVCKPISNFRFTEDH). The helical transmembrane segment at 124–144 (AIMGLAFTWVMALACAVPPLV) threads the bilayer. At 145–173 (GWSRYIPEGMQCSCGVDYYTRAEGFNNES) the chain is on the extracellular side. An N-linked (GlcNAc...) asparagine glycan is attached at asparagine 171. A helical transmembrane segment spans residues 174–195 (FVIYMFIVHFLIPLSVIFFCYG). The Cytoplasmic portion of the chain corresponds to 196–223 (RLLCAVKEAPAAQQESETTQRAEKEVSR). Residues 224–245 (MVVIMVIGFLVCWLPYASVAWW) traverse the membrane as a helical segment. Residues 246 to 257 (IFCNQGSDFGPI) are Extracellular-facing. A helical membrane pass occupies residues 258-279 (FMTLPSFFAKSAAIYNPMIYIC). Lysine 267 is subject to N6-(retinylidene)lysine. The Cytoplasmic segment spans residues 280–289 (MNKQFRHCMI).

This sequence belongs to the G-protein coupled receptor 1 family. Opsin subfamily. Post-translationally, phosphorylated on some or all of the serine and threonine residues present in the C-terminal region. In terms of processing, contains one covalently linked retinal chromophore.

The protein resides in the membrane. It is found in the cell projection. The protein localises to the cilium. It localises to the photoreceptor outer segment. Photoreceptor required for image-forming vision at low light intensity. While most salt water fish species use retinal as chromophore, most freshwater fish use 3-dehydroretinal, or a mixture of retinal and 3-dehydroretinal. Light-induced isomerization of 11-cis to all-trans retinal triggers a conformational change that activates signaling via G-proteins. Subsequent receptor phosphorylation mediates displacement of the bound G-protein alpha subunit by arrestin and terminates signaling. The polypeptide is Rhodopsin (rho) (Abyssocottus korotneffi (Baikalian deep-water sculpin)).